The chain runs to 490 residues: Subtilisin-like protease 8 (490 aa).

The N-terminal stretch at 1–26 (MKGLLSLSVLPVLAYASPMIVDSIHQ) is a signal peptide. Positions 27–134 (DAAPILSSTN…YIERDSEVRA (108 aa)) are excised as a propeptide. The Inhibitor I9 domain maps to 43–133 (SYIVVFKKGV…EYIERDSEVR (91 aa)). One can recognise a Peptidase S8 domain in the interval 144 to 450 (PWGLARISHR…GGSDNYKEIV (307 aa)). Residues D180 and H212 each act as charge relay system in the active site. N282 is a glycosylation site (N-linked (GlcNAc...) asparagine). S378 (charge relay system) is an active-site residue. The N-linked (GlcNAc...) asparagine glycan is linked to N455.

Belongs to the peptidase S8 family.

It is found in the secreted. In terms of biological role, secreted subtilisin-like serine protease with keratinolytic activity that contributes to pathogenicity. The polypeptide is Subtilisin-like protease 8 (SUB8) (Arthroderma otae (strain ATCC MYA-4605 / CBS 113480) (Microsporum canis)).